A 448-amino-acid polypeptide reads, in one-letter code: tRNA modification GTPase MnmE (448 aa).

Positions 22, 79, and 118 each coordinate (6S)-5-formyl-5,6,7,8-tetrahydrofolate. One can recognise a TrmE-type G domain in the interval Gly-214–Gly-371. Asn-224 is a K(+) binding site. GTP contacts are provided by residues Asn-224–Ser-229, Thr-243–Thr-249, and Asp-268–Gly-271. Position 228 (Ser-228) interacts with Mg(2+). Residues Thr-243, Ile-245, and Thr-248 each contribute to the K(+) site. Residue Thr-249 participates in Mg(2+) binding. Lys-448 is a (6S)-5-formyl-5,6,7,8-tetrahydrofolate binding site.

The protein belongs to the TRAFAC class TrmE-Era-EngA-EngB-Septin-like GTPase superfamily. TrmE GTPase family. In terms of assembly, homodimer. Heterotetramer of two MnmE and two MnmG subunits. The cofactor is K(+).

It is found in the cytoplasm. Functionally, exhibits a very high intrinsic GTPase hydrolysis rate. Involved in the addition of a carboxymethylaminomethyl (cmnm) group at the wobble position (U34) of certain tRNAs, forming tRNA-cmnm(5)s(2)U34. The polypeptide is tRNA modification GTPase MnmE (Dechloromonas aromatica (strain RCB)).